We begin with the raw amino-acid sequence, 266 residues long: MVVSNGVATKGVLEAQGVNVYYGSHLAVKDCNISIPERRVVAFIGPSGCGKSTLLRCFNRMNDLVSIARVEGRITYHGSDIYAPSVDPVGLRCSIGMVFQKANPFPKSIYENIAWGAKLNNFQGDMDELVETSLRRAALWDEVKDKLKASGFSLSGGQQQRLCIARAIAVQPEVILMDEPCSALDPISTLKIEGLMHELKEQFTIVIVTHNMQQASRVSDYTAFFNVESVDRGAKVGSLVEYGPTEEIFQNPLKESTRDYVSGRFG.

The ABC transporter domain maps to 13-252; it reads LEAQGVNVYY…GPTEEIFQNP (240 aa). ATP is bound at residue 45 to 52; it reads GPSGCGKS.

Belongs to the ABC transporter superfamily. Phosphate importer (TC 3.A.1.7) family. As to quaternary structure, the complex is composed of two ATP-binding proteins (PstB), two transmembrane proteins (PstC and PstA) and a solute-binding protein (PstS).

Its subcellular location is the cell inner membrane. It carries out the reaction phosphate(out) + ATP + H2O = ADP + 2 phosphate(in) + H(+). In terms of biological role, part of the ABC transporter complex PstSACB involved in phosphate import. Responsible for energy coupling to the transport system. The polypeptide is Phosphate import ATP-binding protein PstB 2 (Synechocystis sp. (strain ATCC 27184 / PCC 6803 / Kazusa)).